Reading from the N-terminus, the 130-residue chain is Small ribosomal subunit protein uS8 (130 aa).

The protein belongs to the universal ribosomal protein uS8 family. Part of the 30S ribosomal subunit. Contacts proteins S5 and S12.

In terms of biological role, one of the primary rRNA binding proteins, it binds directly to 16S rRNA central domain where it helps coordinate assembly of the platform of the 30S subunit. The sequence is that of Small ribosomal subunit protein uS8 from Vibrio campbellii (strain ATCC BAA-1116).